The sequence spans 3016 residues: MSTLPKPQRKTKRNTNRRPMDVKFPGGGQIVGGVYLLPRRGPRLGVRATRKTSERSQPRGRRQPIPKARQSQGRHWAQPGYPWPLYGNEGCGWAGWLLSPRGSRPNWGPNDPRRRSRNLGKVIDTLTCGFADLMGYIPVVGAPLGGVAAALAHGVRAIEDGINYATGNLPGCSFSIFLLALLSCLTTPASAVHYRNISGIYHLTNDCPNSSIIYEADNIIMHTPGCVPCVKTGNKSQCWVPVAPTLAVANASVPIRGFRSHVDLLVGSAAACSALYIGDLCGGVFLVGQLFTFRPRQHTTVQECNCSIYTGHITGHRMAWDMMMNWSPTVTFITSSLLRVPQLLLEIALEGHWGVIGALLYYSMVANWAKVFAVLLLFAGVDATTHIGSSASATTNRLTSFFSPGSKQNVQLIKTNGSWHINRTALNCNDSLHTGFIAGLLYAHRFNSSGCPERLSSCRPLHAFEQGWGPLTYANISGPSNDKPYCWHYPPRPCDIVPARSVCGPVYCFTPSPVVVGTTDRKGLPTYTWGANESDVFLLRSTRPPRGSWFGCTWMNSTGFVKTCGAPPCNTRPVGSGNDTLVCPTDCFRKHPEATYARCGSGPWLTPRCLVNYPYRLWHYPCTVNYTIHKVRMFVGGIEHRFEAACNWTRGERCELDDRDRVEMSPLLFSTTQLSILPCSFTTMPALSTGLIHLHQNIVDVQYLYGVSSAVVSWAVKWEYIVLAFLVLAVARVCACLWLMFLVGQAEAALENLIVLNATSAAGSQGWVWGVVFICAAWYIRGRAAPITTYAILQLWPLLLLVLALPRRAYAYNGEEAASLGMLAIVIITIFTLTPAYKTLLISTLWWIQYYIARAEAMLYVWVPSLQVRGGRDAVILLTCLLHPQLGFEVTKAILALLGPLYILQYSLLKTPYFVRAHILLRVCMFLRGVAGGKYVQAALLRLGAWTGTYIYDHLTPLSDWACDGLRDLAVAVEPVVFSPMEKKVITWGADTVACGDIISGLPVSARRGNLIFLGPADDIRDGGWRLLAPITAYAQQTRGLVGTIVTSLTGRDKNEVEGEIQVVSTATQSFLATTVNGVLWTVYHGAGSKTLAGPKGPICQMYTNVDQDLVGWPAPPGARSLTPCTCGSSDLYLVTRNADVIPARRRGDTRAALLSPRPISTLKGSSGGPMLCPSGHVAGIFRAAVCTRGVAKSLDFVPVENMQSTARSPSFSDNTTPPAVPQTYQVGYLHAPTGSGKSTKVPAAYAAQGYKVLVLNPSVAATLGFGSYMSTAHGIDPNIRTGVRTITTGGAITYSTYGKFLADGGCSGGAYDIIICDECHSTDPTTVLGIGTVLDQAETAGVRLTVLATATPPGSVTVPHPNITEVALSSTGEVPFYGKAIPLEYIKGGRHLIFCHSKKKCDELAKQLTSLGLNAVAFYRGVDVSVIPTSGDVVVCATDALMTGYTGDFDSVIDCNVSVTQVVDFSLDPTFTIETTTMPQDAVSRSQRRGRTGRGKHGVYRYVSQGERPSGIFDTVVLCEAYDTGCAWYELTPSETTVRLRAYLNTPGLPVCQDHLEFWEGVFTGLTHIDAHLLSQTKQGGENFAYLVAYQATVCARAKAPPPSWDTMWKCLIRLKPMLTGPTPLLYRLGAVQNEITTTHPITKYIMTCMSADLEVITSTWVLVGGVLAALAAYCLSVGCVVVCGRISTTGKPVLIPDREVLYQQFDEMEECSRHIPYLVEGQHLAEQFKQKVLGLIQTTTRQAEEIEPVVHSAWPKLEQFWQKHLWNFVSGIQYLAGLSTLPGNPAVASLMSFSASLTSPLSTSTTLLLNILGGWVASQLANPTASTAFVVSGLAGATVGSIGLGRVLVDIIAGYGAGVSGALVAFKIMSGETPSAEDMVNLLPALLSPGALVVGVVCAAILRRHAGPAEGATQWMNRLIAFASRGNHVSPTHYVPETDTSRQVMAILSSLTVTSLLRKLHEWINSDWSTPCSGSWLRDIWDWVCTVLSDFKVWLKSKLVPALPGVPFLSCQRGFRGVWRGDGICRTTCPCGADIVGHVKNGSMRISGSRWCSNIWHGTFPINATTTGPSVPIPEPNYKRALWRVSAEEYVEVARVGDSHFVVGATNQDLKCPCQVPAPEFFTEVDGVRLHRFAPACKPLLRDEISFLVGLNSYAIGSQLPCEPEPDVTVVTSMLVDPSHLTAEAAARRLARGSPPSCASSLASQLSAPSLKATCTTHCAHPDADLIEANLLWRQEVGGNITRVESENKVIVLDSFDPLVPEYDDREPSVPAECHRPNRPKFPPALPIWARPDYNPPLLETWKKPDYAPPLVHGCALPSPVQPPVPPPRRKSVVHLDDSTVATALAELAEKSFPTQPASTPDSDSGHPTTSKSSDQADEGEDTPSEAGSYSSMPPLEGEPGDPDLSSGSWSTVSEEGDSVVCCSMSYSWTGALVTPCAAEEEKLPINPLSNSLIRHHNLVYSTTTRSAAMRQKKVTFDRLQILDQHYNNVVKEVKLRASGVTAKLLSVEEACSLTPPHSARSKFGYGAKDVRSHTSKAINHINSVWEDLLEDNQTPIPTTIMAKNEVFCADVSKGGRKPARLIVYPDLGVRVCEKRALYDVTRKLPTAIMGDAYGFQYSPKQRVDQLLKMWRSKKTPMGFSYDTRCFDSTVTEHDIKTERDVYLSCKLDPVARKAIESLTERLYIGGPMYNSRGQLCGTRRCRASGVLTTSLGNTMTCFIKAEAACRAAGLTNYDMLVCGDDLVVIAESAGVQEDASNLRAFTEAMTRYSAPPGDEPHPAYDLELITSCSSNVSVAHDHTGQRYYYLTRDPTTPLSRAAWETARHTPVNSWLGNIIMYAPAIWVRMVLMTHFFQILQAQEQLDKVLDFDMYGVTYSVSPLQLPAIIQRLHGMAAFSLHGYSPTELNRVGACLRKLGAPPLRAWRHRARAVRAKLIAQGGGAAICGKYLFNWAVKTKLKLTPIPDAARLDLSGWFISGFSGGDIYHSVSRARPRIFLLCLLLLSVGVGIFLLPAR.

Ser2 bears the N-acetylserine; by host mark. Residues 2–23 (STLPKPQRKTKRNTNRRPMDVK) form an interaction with STAT1 region. Positions 2–58 (STLPKPQRKTKRNTNRRPMDVKFPGGGQIVGGVYLLPRRGPRLGVRATRKTSERSQP) are interaction with EIF2AK2/PKR. Residues 2–59 (STLPKPQRKTKRNTNRRPMDVKFPGGGQIVGGVYLLPRRGPRLGVRATRKTSERSQPR) form an interaction with DDX3X region. The interval 2–75 (STLPKPQRKT…PKARQSQGRH (74 aa)) is disordered. Residues 2 to 168 (STLPKPQRKT…EDGINYATGN (167 aa)) are Cytoplasmic-facing. 2 short sequence motifs (nuclear localization signal) span residues 5–13 (PKPQRKTKR) and 38–43 (PRRGPR). The span at 7–16 (PQRKTKRNTN) shows a compositional bias: basic residues. The span at 32–47 (GGVYLLPRRGPRLGVR) shows a compositional bias: low complexity. Ser53 bears the Phosphoserine; by host mark. Short sequence motifs (nuclear localization signal) lie at residues 58-64 (PRGRRQP) and 66-71 (PKARQS). Ser99 and Ser116 each carry phosphoserine; by host. The segment at 112–152 (PRRRSRNLGKVIDTLTCGFADLMGYIPVVGAPLGGVAAALA) is important for endoplasmic reticulum and mitochondrial localization. The segment at 122–173 (VIDTLTCGFADLMGYIPVVGAPLGGVAAALAHGVRAIEDGINYATGNLPGCS) is interaction with APOA2. Residues 164-167 (YATG) form an important for lipid droplets localization region. The helical transmembrane segment at 169 to 189 (LPGCSFSIFLLALLSCLTTPA) threads the bilayer. Positions 178 to 191 (LLALLSCLTTPASA) are cleaved as a propeptide — ER anchor for the core protein, removed in mature form by host signal peptidase. The Lumenal segment spans residues 190–358 (SAVHYRNISG…LEGHWGVIGA (169 aa)). N-linked (GlcNAc...) asparagine; by host glycosylation is found at Asn196, Asn209, Asn234, and Asn250. The important for fusion stretch occupies residues 265–296 (LVGSAAACSALYIGDLCGGVFLVGQLFTFRPR). The N-linked (GlcNAc...) asparagine; by host glycan is linked to Asn305. A helical membrane pass occupies residues 359-379 (LLYYSMVANWAKVFAVLLLFA). Residues 380 to 727 (GVDATTHIGS…WEYIVLAFLV (348 aa)) lie on the Lumenal side of the membrane. The tract at residues 385–411 (THIGSSASATTNRLTSFFSPGSKQNVQ) is HVR1. N-linked (GlcNAc...) (high mannose) asparagine; by host glycans are attached at residues Asn416, Asn422, and Asn429. Disulfide bonds link Cys428–Cys552, Cys451–Cys458, Cys486–Cys494, and Cys503–Cys508. Residue Asn447 is glycosylated (N-linked (GlcNAc...) asparagine; by host). The interval 474 to 478 (ANISG) is HVR2. N-linked (GlcNAc...) asparagine; by host glycosylation occurs at Asn475. The CD81-binding 1 stretch occupies residues 480–493 (SNDKPYCWHYPPRP). The N-linked (GlcNAc...) asparagine; by host glycan is linked to Asn532. Residues 544-551 (PPRGSWFG) form a CD81-binding 2 region. N-linked (GlcNAc...) asparagine; by host glycosylation is present at Asn556. Cystine bridges form between Cys564–Cys569, Cys583–Cys587, Cys599–Cys622, and Cys609–Cys646. 2 N-linked (GlcNAc...) (high mannose) asparagine; by host glycosylation sites follow: Asn625 and Asn647. Cys654 and Cys679 form a disulfide bridge. Residues 662-673 (VEMSPLLFSTTQ) are PKR/eIF2-alpha phosphorylation homology domain (PePHD). The helical transmembrane segment at 728–748 (LAVARVCACLWLMFLVGQAEA) threads the bilayer. Topologically, residues 749-759 (ALENLIVLNAT) are lumenal. A helical membrane pass occupies residues 760–780 (SAAGSQGWVWGVVFICAAWYI). Residues 781-784 (RGRA) are Cytoplasmic-facing. The chain crosses the membrane as a helical span at residues 785–805 (APITTYAILQLWPLLLLVLAL). The Lumenal portion of the chain corresponds to 806 to 815 (PRRAYAYNGE). Residues 816–836 (EAASLGMLAIVIITIFTLTPA) form a helical membrane-spanning segment. The Cytoplasmic portion of the chain corresponds to 837–883 (YKTLLISTLWWIQYYIARAEAMLYVWVPSLQVRGGRDAVILLTCLLH). A helical transmembrane segment spans residues 884–904 (PQLGFEVTKAILALLGPLYIL). Over 905–930 (QYSLLKTPYFVRAHILLRVCMFLRGV) the chain is Lumenal. Residues 905–1028 (QYSLLKTPYF…DIRDGGWRLL (124 aa)) form the Peptidase C18 domain. Positions 906–1208 (YSLLKTPYFV…PVENMQSTAR (303 aa)) are protease NS2-3. Cys924 is lipidated: S-palmitoyl cysteine; by host. Residues 931 to 951 (AGGKYVQAALLRLGAWTGTYI) form a helical membrane-spanning segment. Positions 931 to 951 (AGGKYVQAALLRLGAWTGTYI) are interaction with host SCPS1. The Cytoplasmic portion of the chain corresponds to 952 to 1659 (YDHLTPLSDW…CMSADLEVIT (708 aa)). Catalysis depends on for protease NS2 activity; shared with dimeric partner residues His954, Glu974, and Cys995. A Peptidase S29 domain is found at 1029 to 1210 (APITAYAQQT…ENMQSTARSP (182 aa)). Residues His1085 and Asp1109 each act as charge relay system; for serine protease NS3 activity in the active site. Positions 1125 and 1127 each coordinate Zn(2+). Residue Ser1167 is the Charge relay system; for serine protease NS3 activity of the active site. The Zn(2+) site is built by Cys1173 and His1177. In terms of domain architecture, Helicase ATP-binding spans 1219 to 1371 (PAVPQTYQVG…PNITEVALSS (153 aa)). 1232-1239 (APTGSGKS) provides a ligand contact to ATP. Mg(2+)-binding residues include Ser1239 and Glu1319. The short motif at 1318–1321 (DECH) is the DECH box element. Positions 1488 to 1500 (QRRGRTGRGKHGV) are RNA-binding. The chain crosses the membrane as a helical span at residues 1660 to 1680 (STWVLVGGVLAALAAYCLSVG). Residues 1681–1692 (CVVVCGRISTTG) are NS3-binding. The Cytoplasmic portion of the chain corresponds to 1681-1807 (CVVVCGRIST…SLTSPLSTST (127 aa)). A helical transmembrane segment spans residues 1808–1828 (TLLLNILGGWVASQLANPTAS). Residues 1829 to 1830 (TA) are Lumenal-facing. Residues 1831–1851 (FVVSGLAGATVGSIGLGRVLV) form a helical membrane-spanning segment. Asp1852 is a topological domain (cytoplasmic). The chain crosses the membrane as a helical span at residues 1853–1873 (IIAGYGAGVSGALVAFKIMSG). Residues 1874–1883 (ETPSAEDMVN) lie on the Lumenal side of the membrane. Residues 1884–1904 (LLPALLSPGALVVGVVCAAIL) traverse the membrane as a helical segment. Over 1905–1974 (RRHAGPAEGA…WINSDWSTPC (70 aa)) the chain is Cytoplasmic. The S-palmitoyl cysteine; by host moiety is linked to residue Cys1974. The stretch at 1975-2004 (SGSWLRDIWDWVCTVLSDFKVWLKSKLVPA) is an intramembrane region. Residues 2005–2995 (LPGVPFLSCQ…YHSVSRARPR (991 aa)) lie on the Cytoplasmic side of the membrane. Zn(2+) is bound by residues Cys2013, Cys2031, Cys2033, and Cys2054. The interval 2122-2210 (EFFTEVDGVR…ASSLASQLSA (89 aa)) is FKBP8-binding. The interval 2122-2335 (EFFTEVDGVR…PVPPPRRKSV (214 aa)) is transcriptional activation. Residues 2137 to 2141 (PACKP) form an interaction with non-structural protein 4A region. The interaction with host SKP2 stretch occupies residues 2191–2443 (RLARGSPPSC…ALVTPCAAEE (253 aa)). 6 positions are modified to phosphoserine; by host: Ser2196, Ser2199, Ser2203, Ser2206, Ser2209, and Ser2212. An ISDR region spans residues 2212 to 2251 (SLKATCTTHCAHPDADLIEANLLWRQEVGGNITRVESENK). Residues 2212–2277 (SLKATCTTHC…REPSVPAECH (66 aa)) are interaction with EIF2AK2/PKR. The interval 2251–2309 (KVIVLDSFDPLVPEYDDREPSVPAECHRPNRPKFPPALPIWARPDYNPPLLETWKKPDY) is NS4B-binding. The tract at residues 2302 to 2379 (ETWKKPDYAP…PTTSKSSDQA (78 aa)) is V3. The short motif at 2325-2328 (PPVP) is the SH3-binding element. A Nuclear localization signal motif is present at residues 2330–2338 (PRRKSVVHL). A Glycyl lysine isopeptide (Lys-Gly) (interchain with G-Cter in ubiquitin) cross-link involves residue Lys2353. The segment at 2353-2414 (KSFPTQPAST…PDLSSGSWST (62 aa)) is disordered. A compositionally biased stretch (polar residues) spans 2355-2376 (FPTQPASTPDSDSGHPTTSKSS). Ser2454 bears the Phosphoserine; by host mark. Positions 2639–2757 (PMGFSYDTRC…IAESAGVQED (119 aa)) constitute a RdRp catalytic domain. Asp2645, Asp2743, and Asp2744 together coordinate Mg(2+). A helical transmembrane segment spans residues 2996–3016 (IFLLCLLLLSVGVGIFLLPAR).

This sequence belongs to the hepacivirus polyprotein family. In terms of assembly, homooligomer. Interacts with E1 (via C-terminus). Interacts with the non-structural protein 5A. Interacts (via N-terminus) with host STAT1 (via SH2 domain); this interaction results in decreased STAT1 phosphorylation and ubiquitin-mediated proteasome-dependent STAT1 degradation, leading to decreased IFN-stimulated gene transcription. Interacts with host STAT3; this interaction constitutively activates STAT3. Interacts with host LTBR receptor. Interacts with host TNFRSF1A receptor and possibly induces apoptosis. Interacts with host HNRPK. Interacts with host YWHAE. Interacts with host UBE3A/E6AP. Interacts with host DDX3X. Interacts with host APOA2. Interacts with host RXRA protein. Interacts with host SP110 isoform 3/Sp110b; this interaction sequesters the transcriptional corepressor SP110 away from the nucleus. Interacts with host CREB3 nuclear transcription protein; this interaction triggers cell transformation. Interacts with host ACY3. Interacts with host C1QR1. Interacts with host RBM24; this interaction, which enhances the interaction of the mature core protein with 5'-UTR, may inhibit viral translation and favor replication. Interacts with host EIF2AK2/PKR; this interaction induces the autophosphorylation of EIF2AK2. Part of the viral assembly initiation complex composed of NS2, E1, E2, NS3, NS4A, NS5A and the mature core protein. As to quaternary structure, forms a heterodimer with envelope glycoprotein E2. Interacts with mature core protein. Interacts with protease NS2. The heterodimer E1/E2 interacts with host CLDN1; this interaction plays a role in viral entry into host cell. Interacts with host SPSB2 (via C-terminus). Part of the viral assembly initiation complex composed of NS2, E1, E2, NS3, NS4A, NS5A and the mature core protein. Interacts with host NEURL3; this interaction prevents E1 binding to glycoprotein E2. Forms a heterodimer with envelope glycoprotein E1. Interacts with host CD81 and SCARB1 receptors; these interactions play a role in viral entry into host cell. Interacts with host EIF2AK2/PKR; this interaction inhibits EIF2AK2 and probably allows the virus to evade the innate immune response. Interacts with host CD209/DC-SIGN and CLEC4M/DC-SIGNR. Interact with host SPCS1; this interaction is essential for viral particle assembly. Interacts with protease NS2. The heterodimer E1/E2 interacts with host CLDN1; this interaction plays a role in viral entry into host cell. Part of the viral assembly initiation complex composed of NS2, E1, E2, NS3, NS4A, NS5A and the mature core protein. Interacts with host SLC3A2/4F2hc; the interaction may facilitate viral entry into host cell. Interacts with human PLSCR1. In terms of assembly, homohexamer. Homoheptamer. Interacts with protease NS2. As to quaternary structure, homodimer. Interacts with host SPCS1; this interaction is essential for viral particle assembly. Interacts with envelope glycoprotein E1. Interacts with envelope glycoprotein E2. Interacts with viroporin p7. Interacts with serine protease/helicase NS3. Part of the replication complex composed of NS2, NS3, NS4A, NS4B, NS5A and the RNA-directed RNA polymerase embedded in an ER-derived membranous web. Part of the viral assembly initiation complex composed of NS2, E1, E2, NS3, NS4A, NS5A and the mature core protein. Interacts with protease NS2. Interacts with non-structural protein 4A; this interaction stabilizes the folding of NS3 serine protease. NS3-NS4A interaction is essential for NS3 activation and allows membrane anchorage of the latter. NS3/NS4A complex also prevents phosphorylation of host IRF3, thus preventing the establishment of dsRNA induced antiviral state. Interacts with host MAVS; this interaction leads to the cleavage and inhibition of host MAVS. Interacts with host TICAM1; this interaction leads to the cleavage and inhibition of host TICAM1. Interacts with host TANK-binding kinase/TBK1; this interaction results in the inhibition of the association between TBK1 and IRF3, which leads to the inhibition of IRF3 activation. Interacts with host RBM24. Part of the replication complex composed of NS2, NS3, NS4A, NS4B, NS5A and the RNA-directed RNA polymerase embedded in an ER-derived membranous web. Part of the viral assembly initiation complex composed of NS2, E1, E2, NS3, NS4A, NS5A and the mature core protein. In terms of assembly, interacts with NS3 serine protease; this interaction stabilizes the folding of NS3 serine protease. NS3-NS4A interaction is essential for NS3 activation and allows membrane anchorage of the latter. Interacts with non-structural protein 5A (via N-terminus). Part of the replication complex composed of NS2, NS3, NS4A, NS4B, NS5A and the RNA-directed RNA polymerase embedded in an ER-derived membranous web. Part of the viral assembly initiation complex composed of NS2, E1, E2, NS3, NS4A, NS5A and the mature core protein. As to quaternary structure, homomultimer. Interacts with non-structural protein NS5A. Interacts with host PLA2G4C; this interaction likely initiates the recruitment of replication complexes to lipid droplets. Interacts with host STING; this interaction disrupts the interaction between STING and TBK1 thereby suppressing the interferon signaling. Part of the replication complex composed of NS2, NS3, NS4A, NS4B, NS5A and the RNA-directed RNA polymerase embedded in an ER-derived membranous web. Monomer. Homodimer; dimerization is required for RNA-binding. Interacts with the mature core protein. Interacts (via N-terminus) with non-structural protein 4A. Interacts with non-structural protein 4B. Interacts (via region D2) with RNA-directed RNA polymerase. Part of the viral assembly initiation complex composed of NS2, E1, E2, NS3, NS4A, NS5A and the mature core protein. Part of the replication complex composed of NS2, NS3, NS4A, NS4B, NS5A and the RNA-directed RNA polymerase embedded in an ER-derived membranous web. Interacts with host GRB2. Interacts with host BIN1. Interacts with host PIK3R1. Interacts with host SRCAP. Interacts with host FKBP8. Interacts (via C-terminus) with host VAPB (via MSP domain). Interacts with host EIF2AK2/PKR; this interaction leads to disruption of EIF2AK2 dimerization by NS5A and probably allows the virus to evade the innate immune response. Interacts (via N-terminus) with host PACSIN2 (via N-terminus); this interaction attenuates protein kinase C alpha-mediated phosphorylation of PACSIN2 by disrupting the interaction between PACSIN2 and PRKCA. Interacts (via N-terminus) with host SRC kinase (via SH2 domain). Interacts with most Src-family kinases. Interacts with host IFI27 and SKP2; promotes the ubiquitin-mediated proteasomal degradation of NS5A. Interacts with host GPS2. Interacts with host TNFRSF21; this interaction allows the modulation by the virus of JNK, p38 MAPK, STAT3, and Akt signaling pathways in a DR6-dependent manner. Interacts (via N-terminus) with host CIDEB (via N-terminus); this interaction seems to regulate the association of HCV particles with APOE. Interacts with host CHKA/Choline Kinase-alpha; CHKA bridges host PI4KA and NS5A and potentiates NS5A-stimulated PI4KA activity, which then facilitates the targeting of the ternary complex to the ER for viral replication. Interacts with host SPSB2 (via C-terminus); this interaction targets NS5A for ubiquitination and degradation. Interacts with host RAB18; this interaction may promote the association of NS5A and other replicase components with lipid droplets. Interacts (via region D2) with host PPIA/CYPA; the interaction stimulates RNA-binding ability of NS5A and is dependent on the peptidyl-prolyl cis-trans isomerase activity of PPIA/CYPA. Interacts with host TRIM14; this interaction induces the degradation of NS5A. In terms of assembly, homooligomer. Interacts with non-structural protein 5A. Interacts with host VAPB. Interacts with host PRK2/PKN2. Interacts with host HNRNPA1 and SEPT6; these interactions facilitate viral replication. Part of the replication complex composed of NS2, NS3, NS4A, NS4B, NS5A and the RNA-directed RNA polymerase. It depends on Zn(2+) as a cofactor. Mg(2+) is required as a cofactor. In terms of processing, specific enzymatic cleavages in vivo yield mature proteins. The structural proteins, core, E1, E2 and p7 are produced by proteolytic processing by host signal peptidases. The core protein precursor is synthesized as a 23 kDa, which is retained in the ER membrane through the hydrophobic signal peptide. Cleavage by the signal peptidase releases the 21 kDa mature core protein. The cleavage of the core protein precursor occurs between aminoacids 176 and 188 but the exact cleavage site is not known. Some degraded forms of the core protein appear as well during the course of infection. The other proteins (p7, NS2, NS3, NS4A, NS4B, NS5A and NS5B) are cleaved by the viral proteases. Autoprocessing between NS2 and NS3 is mediated by the NS2 cysteine protease catalytic domain and regulated by the NS3 N-terminal domain. Post-translationally, phosphorylated by host PKC and PKA. Ubiquitinated; mediated by UBE3A and leading to core protein subsequent proteasomal degradation. In terms of processing, highly N-glycosylated. Post-translationally, palmitoylation is required for NS2/3 autoprocessing and E2 recruitment to membranes. Palmitoylated. This modification may play a role in its polymerization or in protein-protein interactions. In terms of processing, phosphorylated on serines in a basal form termed p56. p58 is a hyperphosphorylated form of p56. p56 and p58 coexist in the cell in roughly equivalent amounts. Hyperphosphorylation is dependent on the presence of NS4A. Host CSNK1A1/CKI-alpha or RPS6KB1 kinases may be responsible for NS5A phosphorylation. Post-translationally, tyrosine phosphorylation is essential for the interaction with host SRC. Ubiquitinated. Ubiquitination, most probably at Lys-2353, mediated by host IFI27 and SKP2 leads to proteasomal degradation, restricting viral infection. Ubiquitination by host TRIM22 leads to interruption of viral replication. In terms of processing, the N-terminus is phosphorylated by host PRK2/PKN2.

The protein resides in the host endoplasmic reticulum membrane. It localises to the host mitochondrion membrane. Its subcellular location is the virion. It is found in the host cytoplasm. The protein localises to the host nucleus. The protein resides in the host lipid droplet. It localises to the virion membrane. Its subcellular location is the host mitochondrion. It is found in the host cell membrane. The protein localises to the host perinuclear region. It carries out the reaction Hydrolysis of four peptide bonds in the viral precursor polyprotein, commonly with Asp or Glu in the P6 position, Cys or Thr in P1 and Ser or Ala in P1'.. The enzyme catalyses a ribonucleoside 5'-triphosphate + H2O = a ribonucleoside 5'-diphosphate + phosphate + H(+). It catalyses the reaction ATP + H2O = ADP + phosphate + H(+). The catalysed reaction is RNA(n) + a ribonucleoside 5'-triphosphate = RNA(n+1) + diphosphate. Inhibited by the antiviral drug hexamethylene amiloride. Inhibition by amantadine appears to be genotype-dependent. Also inhibited by long-alkyl-chain iminosugar derivatives. Its activity is regulated as follows. Activity is up-regulated by PRK2/PKN2-mediated phosphorylation. Functionally, packages viral RNA to form a viral nucleocapsid, and promotes virion budding. Participates in the viral particle production as a result of its interaction with the non-structural protein 5A. Binds RNA and may function as a RNA chaperone to induce the RNA structural rearrangements taking place during virus replication. Modulates viral translation initiation by interacting with viral IRES and 40S ribosomal subunit. Affects various cell signaling pathways, host immunity and lipid metabolism. Prevents the establishment of cellular antiviral state by blocking the interferon-alpha/beta (IFN-alpha/beta) and IFN-gamma signaling pathways and by blocking the formation of phosphorylated STAT1 and promoting ubiquitin-mediated proteasome-dependent degradation of STAT1. Activates STAT3 leading to cellular transformation. Regulates the activity of cellular genes, including c-myc and c-fos. May repress the promoter of p53, and sequester CREB3 and SP110 isoform 3/Sp110b in the cytoplasm. Represses cell cycle negative regulating factor CDKN1A, thereby interrupting an important check point of normal cell cycle regulation. Targets transcription factors involved in the regulation of inflammatory responses and in the immune response: suppresses TNF-induced NF-kappa-B activation, and activates AP-1. Binds to dendritic cells (DCs) via C1QR1, resulting in down-regulation of T-lymphocytes proliferation. Alters lipid metabolism by interacting with hepatocellular proteins involved in lipid accumulation and storage. Induces up-regulation of FAS promoter activity, and thereby contributes to the increased triglyceride accumulation in hepatocytes (steatosis). Its function is as follows. Forms a heterodimer with envelope glycoprotein E2, which mediates virus attachment to the host cell, virion internalization through clathrin-dependent endocytosis and fusion with host membrane. Fusion with the host cell is most likely mediated by both E1 and E2, through conformational rearrangements of the heterodimer required for fusion rather than a classical class II fusion mechanism. E1/E2 heterodimer binds host apolipoproteins such as APOB and ApoE thereby forming a lipo-viro-particle (LVP). APOE associated to the LVP allows the initial virus attachment to cell surface receptors such as the heparan sulfate proteoglycans (HSPGs), syndecan-1 (SDC1), syndecan-1 (SDC2), the low-density lipoprotein receptor (LDLR) and scavenger receptor class B type I (SCARB1). The cholesterol transfer activity of SCARB1 allows E2 exposure and binding of E2 to SCARB1 and the tetraspanin CD81. E1/E2 heterodimer binding on CD81 activates the epithelial growth factor receptor (EGFR) signaling pathway. Diffusion of the complex E1-E2-EGFR-SCARB1-CD81 to the cell lateral membrane allows further interaction with Claudin 1 (CLDN1) and occludin (OCLN) to finally trigger HCV entry. Forms a heterodimer with envelope glycoprotein E1, which mediates virus attachment to the host cell, virion internalization through clathrin-dependent endocytosis and fusion with host membrane. Fusion with the host cell is most likely mediated by both E1 and E2, through conformational rearrangements of the heterodimer required for fusion rather than a classical class II fusion mechanism. The interaction between envelope glycoprotein E2 and host apolipoprotein E/APOE allows the proper assembly, maturation and infectivity of the viral particles. This interaction is probably promoted via the up-regulation of cellular autophagy by the virus. E1/E2 heterodimer binds host apolipoproteins such as APOB and APOE thereby forming a lipo-viro-particle (LVP). APOE associated to the LVP allows the initial virus attachment to cell surface receptors such as the heparan sulfate proteoglycans (HSPGs), syndecan-1 (SDC1), syndecan-1 (SDC2), the low-density lipoprotein receptor (LDLR) and scavenger receptor class B type I (SCARB1). The cholesterol transfer activity of SCARB1 allows E2 exposure and binding of E2 to SCARB1 and the tetraspanin CD81. E1/E2 heterodimer binding on CD81 activates the epithelial growth factor receptor (EGFR) signaling pathway. Diffusion of the complex E1-E2-EGFR-SCARB1-CD81 to the cell lateral membrane allows further interaction with Claudin 1 (CLDN1) and occludin (OCLN) to finally trigger HCV entry. Inhibits host EIF2AK2/PKR activation, preventing the establishment of an antiviral state. Viral ligand for CD209/DC-SIGN and CLEC4M/DC-SIGNR, which are respectively found on dendritic cells (DCs), and on liver sinusoidal endothelial cells and macrophage-like cells of lymph node sinuses. These interactions allow the capture of circulating HCV particles by these cells and subsequent facilitated transmission to permissive cells such as hepatocytes and lymphocyte subpopulations. The interaction between E2 and host amino acid transporter complex formed by SLC3A2 and SLC7A5/LAT1 may facilitate viral entry into host cell. In terms of biological role, ion channel protein that acts as a viroporin and plays an essential role in the assembly, envelopment and secretion of viral particles. Regulates the host cell secretory pathway, which induces the intracellular retention of viral glycoproteins and favors assembly of viral particles. Creates a pore in acidic organelles and releases Ca(2+) and H(+) in the cytoplasm of infected cells, leading to a productive viral infection. High levels of cytoplasmic Ca(2+) may trigger membrane trafficking and transport of viral ER-associated proteins to viroplasms, sites of viral genome replication. This ionic imbalance induces the assembly of the inflammasome complex, which triggers the maturation of pro-IL-1beta into IL-1beta through the action of caspase-1. Targets also host mitochondria and induces mitochondrial depolarization. In addition of its role as a viroporin, acts as a lipid raft adhesion factor. Functionally, cysteine protease required for the proteolytic auto-cleavage between the non-structural proteins NS2 and NS3. The N-terminus of NS3 is required for the function of NS2 protease (active region NS2-3). Promotes the initiation of viral particle assembly by mediating the interaction between structural and non-structural proteins. Its function is as follows. Displays three enzymatic activities: serine protease with a chymotrypsin-like fold, NTPase and RNA helicase. NS3 serine protease, in association with NS4A, is responsible for the cleavages of NS3-NS4A, NS4A-NS4B, NS4B-NS5A and NS5A-NS5B. The NS3/NS4A complex prevents phosphorylation of host IRF3, thus preventing the establishment of dsRNA induced antiviral state. The NS3/NS4A complex induces host amino acid transporter component SLC3A2, thus contributing to HCV propagation. NS3 RNA helicase binds to RNA and unwinds both dsDNA and dsRNA in the 3' to 5' direction, and likely resolves RNA complicated stable secondary structures in the template strand. Binds a single ATP and catalyzes the unzipping of a single base pair of dsRNA. Inhibits host antiviral proteins TBK1 and IRF3 thereby preventing the establishment of an antiviral state. Cleaves host MAVS/CARDIF thereby preventing the establishment of an antiviral state. Cleaves host TICAM1/TRIF, thereby disrupting TLR3 signaling and preventing the establishment of an antiviral state. Peptide cofactor which forms a non-covalent complex with the N-terminal of NS3 serine protease. The NS3/NS4A complex prevents phosphorylation of host IRF3, thus preventing the establishment of dsRNA induced antiviral state. The NS3/NS4A complex induces host amino acid transporter component SLC3A2, thus contributing to HCV propagation. In terms of biological role, induces a specific membrane alteration that serves as a scaffold for the virus replication complex. This membrane alteration gives rise to the so-called ER-derived membranous web that contains the replication complex. NS4B self-interaction contributes to its function in membranous web formation. Promotes host TRIF protein degradation in a CASP8-dependent manner thereby inhibiting host TLR3-mediated interferon signaling. Disrupts the interaction between STING and TBK1 contributing to the inhibition of interferon signaling. Functionally, phosphorylated protein that is indispensable for viral replication and assembly. Both hypo- and hyperphosphorylated states are required for the viral life cycle. The hyperphosphorylated form of NS5A is an inhibitor of viral replication. Involved in RNA-binding and especially in binding to the viral genome. Zinc is essential for RNA-binding. Participates in the viral particle production as a result of its interaction with the mature viral core protein. Its interaction with host VAPB may target the viral replication complex to vesicles. Down-regulates viral IRES translation initiation. Mediates interferon resistance, presumably by interacting with and inhibiting host EIF2AK2/PKR. Prevents BIN1-induced apoptosis. Acts as a transcriptional activator of some host genes important for viral replication when localized in the nucleus. Via the interaction with host PACSIN2, modulates lipid droplet formation in order to promote virion assembly. Modulates TNFRSF21/DR6 signaling pathway for viral propagation. Its function is as follows. RNA-dependent RNA polymerase that performs primer-template recognition and RNA synthesis during viral replication. Initiates RNA transcription/replication at a flavin adenine dinucleotide (FAD), resulting in a 5'- FAD cap on viral RNAs. In this way, recognition of viral 5' RNA by host pattern recognition receptors can be bypassed, thereby evading activation of antiviral pathways. The chain is Genome polyprotein from Hepatitis C virus genotype 6k (isolate VN405) (HCV).